The primary structure comprises 589 residues: Transmembrane 9 superfamily member 3 (589 aa).

An N-terminal signal peptide occupies residues M1–A28. An N-linked (GlcNAc...) asparagine glycan is attached at N174. The next 5 helical transmembrane spans lie at F224–L244, L294–I314, A328–A348, F360–I380, and A389–L409. N-linked (GlcNAc...) asparagine glycosylation is present at N419. The next 4 helical transmembrane spans lie at I449–F469, G482–C502, F519–F539, and F551–G571.

It belongs to the nonaspanin (TM9SF) (TC 9.A.2) family.

The protein localises to the membrane. This Homo sapiens (Human) protein is Transmembrane 9 superfamily member 3 (TM9SF3).